The following is a 595-amino-acid chain: DNA primase (595 aa).

Residues 38–62 form a CHC2-type zinc finger; that stretch reads CPFHQEKTPSFTVSDSKRFFYCFGC. A Toprim domain is found at 250 to 332; the sequence is NHSILVEGYF…EKKISFIRLP (83 aa). Residues glutamate 256, aspartate 300, and aspartate 302 each contribute to the Mg(2+) site.

Belongs to the DnaG primase family. Monomer. Interacts with DnaB. It depends on Zn(2+) as a cofactor. Mg(2+) serves as cofactor.

The enzyme catalyses ssDNA + n NTP = ssDNA/pppN(pN)n-1 hybrid + (n-1) diphosphate.. Functionally, RNA polymerase that catalyzes the synthesis of short RNA molecules used as primers for DNA polymerase during DNA replication. The polypeptide is DNA primase (Rickettsia felis (strain ATCC VR-1525 / URRWXCal2) (Rickettsia azadi)).